Consider the following 150-residue polypeptide: MGVFDPTLLILLALAALGIISQNMTVTLAILFLVAVRITPLNHYFPWVEKYGLSFGVLVLTIGVMAPIASGKISAGDVLSSFLHWKSLMAVAIGVAVSWLGGRGVVLMSNQPSVVAGLLVGTVMGVALFRGVPVGPLIAAGLLSLLIGKG.

4 helical membrane passes run 10 to 32 (ILLA…AILF), 51 to 71 (YGLS…IASG), 88 to 108 (LMAV…VVLM), and 127 to 147 (ALFR…SLLI).

This sequence belongs to the UPF0756 family.

Its subcellular location is the cell membrane. The polypeptide is UPF0756 membrane protein Dd1591_2981 (Dickeya chrysanthemi (strain Ech1591) (Dickeya zeae (strain Ech1591))).